A 154-amino-acid polypeptide reads, in one-letter code: Large ribosomal subunit protein uL23 (154 aa).

The tract at residues 1 to 39 (MAPAKADPSKKSDPKAQAAKVAKAVKSGSTLKKKSQKIR) is disordered. The segment covering 15 to 26 (KAQAAKVAKAVK) has biased composition (low complexity).

The protein belongs to the universal ribosomal protein uL23 family.

Functionally, this protein binds to a specific region on the 26S rRNA. This chain is Large ribosomal subunit protein uL23 (RPL23A), found in Nicotiana tabacum (Common tobacco).